A 270-amino-acid polypeptide reads, in one-letter code: NADPH-dependent 7-cyano-7-deazaguanine reductase (270 aa).

Ile-79–Ser-81 contributes to the substrate binding site. Position 81–82 (Ser-81–Lys-82) interacts with NADPH. The active-site Thioimide intermediate is the Cys-177. Asp-184 serves as the catalytic Proton donor. Substrate is bound at residue His-216–Glu-217. Residue Arg-245–Gly-246 coordinates NADPH.

The protein belongs to the GTP cyclohydrolase I family. QueF type 2 subfamily. In terms of assembly, homodimer.

The protein localises to the cytoplasm. The enzyme catalyses 7-aminomethyl-7-carbaguanine + 2 NADP(+) = 7-cyano-7-deazaguanine + 2 NADPH + 3 H(+). It functions in the pathway tRNA modification; tRNA-queuosine biosynthesis. Functionally, catalyzes the NADPH-dependent reduction of 7-cyano-7-deazaguanine (preQ0) to 7-aminomethyl-7-deazaguanine (preQ1). The polypeptide is NADPH-dependent 7-cyano-7-deazaguanine reductase (Acinetobacter baumannii (strain ACICU)).